Consider the following 897-residue polypeptide: Alanine--tRNA ligase (897 aa).

Residues His-591, His-595, Cys-695, and His-699 each contribute to the Zn(2+) site.

This sequence belongs to the class-II aminoacyl-tRNA synthetase family. The cofactor is Zn(2+).

The protein localises to the cytoplasm. The enzyme catalyses tRNA(Ala) + L-alanine + ATP = L-alanyl-tRNA(Ala) + AMP + diphosphate. In terms of biological role, catalyzes the attachment of alanine to tRNA(Ala) in a two-step reaction: alanine is first activated by ATP to form Ala-AMP and then transferred to the acceptor end of tRNA(Ala). Also edits incorrectly charged Ser-tRNA(Ala) and Gly-tRNA(Ala) via its editing domain. This Methanobrevibacter smithii (strain ATCC 35061 / DSM 861 / OCM 144 / PS) protein is Alanine--tRNA ligase.